A 657-amino-acid chain; its full sequence is uncharacterized protein (657 aa).

Position 114 is a phosphoserine (serine 114). Disordered stretches follow at residues 142–216, 228–248, 291–312, 335–354, and 399–522; these read LASQ…SDEE, SSRE…EEEE, STRS…SHTP, SSPG…EGAD, and AEAS…SGRH. The segment covering 143-169 has biased composition (polar residues); sequence ASQNTDKTSQNQARELPVTENNAQNAK. Basic and acidic residues predominate over residues 190-206; the sequence is AGKERTLQTPKQKEPAR. A Phosphoserine modification is found at serine 213. Composition is skewed to polar residues over residues 234–243 and 301–312; these read TNQGFSSANV and SHVSSDTASHTP. Acidic residues predominate over residues 343–354; that stretch reads ETVDEPVSEGAD. Positions 437–451 are enriched in low complexity; sequence SASSASAIQQDSTSS. Residues 462–484 show a composition bias toward polar residues; the sequence is NTVSSAYSEDFENSPSLTASEPT. Over residues 485-495 the composition is skewed to basic and acidic residues; sequence AHSKESLDRTL. Over residues 499–513 the composition is skewed to polar residues; the sequence is SESSSSVKTDLPQTA.

This is an uncharacterized protein from Homo sapiens (Human).